The primary structure comprises 405 residues: Elongation factor Tu (405 aa).

In terms of domain architecture, tr-type G spans K10–E215. The tract at residues G19–T26 is G1. GTP is bound at residue G19–T26. T26 is a binding site for Mg(2+). Residues G61–N65 are G2. Positions D82–G85 are G3. GTP-binding positions include D82–H86 and N137–D140. Residues N137–D140 form a G4 region. Residues S175–L177 are G5.

It belongs to the TRAFAC class translation factor GTPase superfamily. Classic translation factor GTPase family. EF-Tu/EF-1A subfamily. As to quaternary structure, monomer.

The protein resides in the cytoplasm. It carries out the reaction GTP + H2O = GDP + phosphate + H(+). In terms of biological role, GTP hydrolase that promotes the GTP-dependent binding of aminoacyl-tRNA to the A-site of ribosomes during protein biosynthesis. This is Elongation factor Tu from Deinonema sp.